The following is a 460-amino-acid chain: 7-cyano-7-deazaguanine synthase 2 (460 aa).

The active-site For GATase activity is the C2. The Glutamine amidotransferase type-2 domain occupies C2 to N225. A245–A255 is an ATP binding site. Positions 426, 434, 437, and 440 each coordinate Zn(2+).

Belongs to the QueC family. Zn(2+) serves as cofactor.

The enzyme catalyses 7-carboxy-7-deazaguanine + NH4(+) + ATP = 7-cyano-7-deazaguanine + ADP + phosphate + H2O + H(+). It participates in purine metabolism; 7-cyano-7-deazaguanine biosynthesis. Catalyzes the ATP-dependent conversion of 7-carboxy-7-deazaguanine (CDG) to 7-cyano-7-deazaguanine (preQ(0)). This Sulfurisphaera tokodaii (strain DSM 16993 / JCM 10545 / NBRC 100140 / 7) (Sulfolobus tokodaii) protein is 7-cyano-7-deazaguanine synthase 2 (queC2).